Here is a 316-residue protein sequence, read N- to C-terminus: Transaldolase (316 aa).

K131 serves as the catalytic Schiff-base intermediate with substrate.

This sequence belongs to the transaldolase family. Type 1 subfamily. As to quaternary structure, homodimer.

Its subcellular location is the cytoplasm. It carries out the reaction D-sedoheptulose 7-phosphate + D-glyceraldehyde 3-phosphate = D-erythrose 4-phosphate + beta-D-fructose 6-phosphate. It functions in the pathway carbohydrate degradation; pentose phosphate pathway; D-glyceraldehyde 3-phosphate and beta-D-fructose 6-phosphate from D-ribose 5-phosphate and D-xylulose 5-phosphate (non-oxidative stage): step 2/3. Transaldolase is important for the balance of metabolites in the pentose-phosphate pathway. The polypeptide is Transaldolase (Buchnera aphidicola subsp. Baizongia pistaciae (strain Bp)).